Here is a 256-residue protein sequence, read N- to C-terminus: Aspirochlorine biosynthesis protein F (256 aa).

Asn-19 is a glycosylation site (N-linked (GlcNAc...) asparagine). 3 helical membrane-spanning segments follow: residues 21–41 (SITP…GPHF), 163–183 (LVWV…FFFT), and 214–234 (FGLG…ILAV).

It is found in the membrane. It functions in the pathway mycotoxin biosynthesis. Part of the gene cluster that mediates the biosynthesis of aspirochlorine (or antibiotic A30641), an unusual halogenated spiro compound with distinctive antifungal properties due to selective inhibition of protein biosynthesis, and which is also active against bacteria, viruses, and murine tumor cells. The non-ribosomal peptide synthetase (NRPS) aclP is responsible the formation of the diketopiperazine (DKP) core from the condensation of 2 phenylalanine residues. One Phe residue is tailored into chlorotyrosine by hydroxylation and chlorination, whereas the second Phe undergoes an unprecedented C-C bond cleavage to be converted into glycine. After formation of the DKP, sulfur is incorporated into the DKP by conjugation with glutathione by aclG, followed by its stepwise degradation to the thiol by aclI, aclJ and aclK, and the dithiol oxidation by aclT. In addition, oxygenases (aclB, aclC, aclL and aclO) and O-methyltransferases (aclM and aclU) act as tailoring enzymes to produce the intermediate dechloroaspirochlorine. Ultimately, chlorination of dechloroaspirochlorine by the halogenase aclH is the last step in the aspirochlorine pathway. In Aspergillus oryzae (strain ATCC 42149 / RIB 40) (Yellow koji mold), this protein is Aspirochlorine biosynthesis protein F.